The sequence spans 98 residues: Keratinocyte differentiation-associated protein (98 aa).

A signal peptide spans 1–22 (MKIPILPIVALLSLLALHAAQG).

Ubiquitously expressed in stratified epithelium.

It is found in the secreted. May act as a soluble regulator of keratinocyte differentiation. May play an important role in embryonic skin morphogenesis. This is Keratinocyte differentiation-associated protein from Rattus norvegicus (Rat).